We begin with the raw amino-acid sequence, 201 residues long: Putative toxin HigB2 (201 aa).

It belongs to the mycobacterial HigB family.

Functionally, putative toxic component of a type II toxin-antitoxin (TA) system. Its cognate antitoxin would be HigA2. In Mycobacterium tuberculosis (strain ATCC 25618 / H37Rv), this protein is Putative toxin HigB2.